We begin with the raw amino-acid sequence, 317 residues long: Universal stress protein Mb2019 (317 aa).

Residues glycine 13, 128–134 (GYRGQGA), 142–143 (SV), glycine 175, aspartate 208, 277–283 (GSHGRGG), and 291–293 (SVS) contribute to the ATP site.

The protein belongs to the universal stress protein A family.

This is Universal stress protein Mb2019 from Mycobacterium bovis (strain ATCC BAA-935 / AF2122/97).